Here is a 347-residue protein sequence, read N- to C-terminus: Tetraacyldisaccharide 4'-kinase (347 aa).

54 to 61 (TVGGAGKT) contributes to the ATP binding site.

This sequence belongs to the LpxK family.

The enzyme catalyses a lipid A disaccharide + ATP = a lipid IVA + ADP + H(+). It functions in the pathway glycolipid biosynthesis; lipid IV(A) biosynthesis; lipid IV(A) from (3R)-3-hydroxytetradecanoyl-[acyl-carrier-protein] and UDP-N-acetyl-alpha-D-glucosamine: step 6/6. Transfers the gamma-phosphate of ATP to the 4'-position of a tetraacyldisaccharide 1-phosphate intermediate (termed DS-1-P) to form tetraacyldisaccharide 1,4'-bis-phosphate (lipid IVA). This is Tetraacyldisaccharide 4'-kinase from Rhizobium etli (strain CIAT 652).